We begin with the raw amino-acid sequence, 195 residues long: Achaete-scute homolog 1b (195 aa).

In terms of domain architecture, bHLH spans 66–118 (MAVARRNERERNRVKQVNMGFQTLRQHVPNGAANKKMSKVETLRSAVEYIRAL). The tract at residues 141–164 (VSNAYSAGPESPHSAYSSDEGSYE) is disordered.

In terms of assembly, efficient DNA binding requires dimerization with another bHLH protein. In terms of tissue distribution, in the 24 hours embryo, expressed in hindbrain close to the anterior and posterior boundaries of rhombomeres 2-6 and in ventral cells close to the floor plate of most rhombomeres. Also expressed in the telencephalon, diencephalon, tegmentum and spinal cord at sites distinct from those expressing ascl1a. Not expressed in the adenohypophysis.

It localises to the nucleus. Transcriptional regulator. May mediate transcription activation by binding to the E box-containing promoter. Involved in neurogenesis. Involved in maintaining rhombomere boundaries in the hindbrain, probably via up-regulation of delta expression. May mediate transcription activation by binding to the E box-containing promoter. This chain is Achaete-scute homolog 1b, found in Danio rerio (Zebrafish).